A 499-amino-acid chain; its full sequence is MTPRYVLAIDQGTTSSRAILFDRAGDIVGSAQREFAQIFPQPGWVEHDPREILTSVYATLTELLSRGQIDPRHIAALGITNQRETTVVWDRATGQPIHNAIVWQSRQSHTICERLKSEGHEALVRERTGLLIDAYFSATKVRWILDHVEGAQQRAERGELLFGTIDSWLVWNLSGGQAHVTDYSNAARTLLFNIHTLDWDDDLLALLDIPRAMLPQVRDSSSVYAHTRPQFFFDHPIPIAGIAGDQQAALFGQACFQPGMVKNTYGTGCFMLMHTGAQAVRSRNGLLTTIAWGLDGRVEYALEGSIFVAGSVVQWLRDGLRMIERAGDSQALAVQVPDSGGVYLVPAFVGLGAPYWRSDVRGAMFGLTRGTHKAHFVRAALEAMAYQTRDVLDAMQSDAGIALTELRADGGAIGNDFLAGFQADILGVPLLRPRLTETTALGAAYLAGLAVGFWTSREQIAAQWGLDRRFEPQMEVARREKLYAGWQQAVAATLAFHVD.

ADP is bound at residue Thr13. ATP is bound by residues Thr13, Thr14, and Ser15. Sn-glycerol 3-phosphate is bound at residue Thr13. Residue Arg17 coordinates ADP. Sn-glycerol 3-phosphate-binding residues include Arg83, Glu84, Tyr135, and Asp245. Residues Arg83, Glu84, Tyr135, Asp245, and Gln246 each coordinate glycerol. ADP is bound by residues Thr267 and Gly310. Thr267, Gly310, Gln314, and Gly411 together coordinate ATP. Residues Gly411 and Asn415 each contribute to the ADP site.

The protein belongs to the FGGY kinase family.

It carries out the reaction glycerol + ATP = sn-glycerol 3-phosphate + ADP + H(+). The protein operates within polyol metabolism; glycerol degradation via glycerol kinase pathway; sn-glycerol 3-phosphate from glycerol: step 1/1. Inhibited by fructose 1,6-bisphosphate (FBP). In terms of biological role, key enzyme in the regulation of glycerol uptake and metabolism. Catalyzes the phosphorylation of glycerol to yield sn-glycerol 3-phosphate. The polypeptide is Glycerol kinase (Stenotrophomonas maltophilia (strain R551-3)).